A 361-amino-acid polypeptide reads, in one-letter code: Peptide chain release factor 1 (361 aa).

An N5-methylglutamine modification is found at Gln-233. The disordered stretch occupies residues 282 to 310; that stretch reads SKKQAERAQNRKSQVGSGDRSERIRTYNF.

It belongs to the prokaryotic/mitochondrial release factor family. Post-translationally, methylated by PrmC. Methylation increases the termination efficiency of RF1.

It localises to the cytoplasm. Peptide chain release factor 1 directs the termination of translation in response to the peptide chain termination codons UAG and UAA. This is Peptide chain release factor 1 from Treponema denticola (strain ATCC 35405 / DSM 14222 / CIP 103919 / JCM 8153 / KCTC 15104).